Reading from the N-terminus, the 398-residue chain is Bifunctional enzyme IspD/IspF (398 aa).

The tract at residues 1–234 is 2-C-methyl-D-erythritol 4-phosphate cytidylyltransferase; sequence MSNSKRTAAI…SRLGALLGDI (234 aa). Residues 235-398 form a 2-C-methyl-D-erythritol 2,4-cyclodiphosphate synthase region; the sequence is RTGTGYDVHA…LPWGTNGLAD (164 aa). Residues aspartate 241 and histidine 243 each coordinate a divalent metal cation. 4-CDP-2-C-methyl-D-erythritol 2-phosphate contacts are provided by residues 241 to 243 and 267 to 268; these read DVH and HS. A divalent metal cation is bound at residue histidine 275. 4-CDP-2-C-methyl-D-erythritol 2-phosphate contacts are provided by residues 289-291, 365-368, phenylalanine 372, and arginine 375; these read DIG and TTSE.

This sequence in the N-terminal section; belongs to the IspD/TarI cytidylyltransferase family. IspD subfamily. It in the C-terminal section; belongs to the IspF family. A divalent metal cation is required as a cofactor.

It catalyses the reaction 2-C-methyl-D-erythritol 4-phosphate + CTP + H(+) = 4-CDP-2-C-methyl-D-erythritol + diphosphate. It carries out the reaction 4-CDP-2-C-methyl-D-erythritol 2-phosphate = 2-C-methyl-D-erythritol 2,4-cyclic diphosphate + CMP. It participates in isoprenoid biosynthesis; isopentenyl diphosphate biosynthesis via DXP pathway; isopentenyl diphosphate from 1-deoxy-D-xylulose 5-phosphate: step 2/6. The protein operates within isoprenoid biosynthesis; isopentenyl diphosphate biosynthesis via DXP pathway; isopentenyl diphosphate from 1-deoxy-D-xylulose 5-phosphate: step 4/6. Its function is as follows. Bifunctional enzyme that catalyzes the formation of 4-diphosphocytidyl-2-C-methyl-D-erythritol from CTP and 2-C-methyl-D-erythritol 4-phosphate (MEP) (IspD), and catalyzes the conversion of 4-diphosphocytidyl-2-C-methyl-D-erythritol 2-phosphate (CDP-ME2P) to 2-C-methyl-D-erythritol 2,4-cyclodiphosphate (ME-CPP) with a corresponding release of cytidine 5-monophosphate (CMP) (IspF). This is Bifunctional enzyme IspD/IspF from Rhodopseudomonas palustris (strain BisB18).